A 472-amino-acid polypeptide reads, in one-letter code: Ulvan lyase (472 aa).

Residues 1-21 (MIIKQYLLKISLCVLLLGCDS) form the signal peptide. The substrate site is built by N46 and N109. H110 (proton donor) is an active-site residue. The substrate site is built by K112 and H130. Y175 (proton acceptor) is an active-site residue. Residues R191, H195, and Y233 each coordinate substrate. H195 provides a ligand contact to Zn(2+). Zn(2+) contacts are provided by H251, C253, and H265. Position 265 (H265) interacts with substrate.

The protein belongs to the polysaccharide lyase 25 family.

In terms of biological role, ulvan lyase involved in ulvan degradation. Ulvan is the main polysaccharide component of the Ulvales (green seaweed) cell wall. It is composed of disaccharide building blocks comprising 3-sulfated rhamnose (Rha3S) linked to D-glucuronic acid (GlcA), L-iduronic acid (IduA), or D-xylose (Xyl). Ulvan lyase catalyzes the endolytic cleavage of the glycosidic bond between Rha3S and the uronic acids GlcA or IduA, producing oligosaccharides that have unsaturated 4-deoxy-L-threo-hex-4-enopyranosiduronic acid (deltaUA) at the non-reducing end. This results eventually in the degradation of the ulvan polysaccharide into deltaUA-Rha3S disaccharides and deltaUA-Rha3S-Xyl-Rha3S tetrasaccharides. The sequence is that of Ulvan lyase from Nonlabens ulvanivorans (Persicivirga ulvanivorans).